A 56-amino-acid polypeptide reads, in one-letter code: Large ribosomal subunit protein uL30 (56 aa).

Belongs to the universal ribosomal protein uL30 family. As to quaternary structure, part of the 50S ribosomal subunit.

The polypeptide is Large ribosomal subunit protein uL30 (Nitratidesulfovibrio vulgaris (strain DSM 19637 / Miyazaki F) (Desulfovibrio vulgaris)).